Reading from the N-terminus, the 1146-residue chain is Transcription-repair-coupling factor (1146 aa).

A Helicase ATP-binding domain is found at 617–778 (DMCQPKAMDR…MNGIRDLSII (162 aa)). 630-637 (GDVGFGKT) contributes to the ATP binding site. The DEEH box motif lies at 731-734 (DEEH). Residues 800-953 (VREAILREIL…GFILATHDLE (154 aa)) enclose the Helicase C-terminal domain.

In the N-terminal section; belongs to the UvrB family. The protein in the C-terminal section; belongs to the helicase family. RecG subfamily.

It is found in the cytoplasm. Its function is as follows. Couples transcription and DNA repair by recognizing RNA polymerase (RNAP) stalled at DNA lesions. Mediates ATP-dependent release of RNAP and its truncated transcript from the DNA, and recruitment of nucleotide excision repair machinery to the damaged site. This is Transcription-repair-coupling factor from Haemophilus influenzae (strain ATCC 51907 / DSM 11121 / KW20 / Rd).